Consider the following 135-residue polypeptide: RxLR effector protein PITG_02860 (135 aa).

Residues 1–18 form the signal peptide; it reads MRLAFLLLAVSHFICGNA. The RxLR-dEER motif lies at 48–64; the sequence is RKLLRTDERLSEANEER. An NRL1-binding domain region spans residues 126–135; sequence LKDPQAFRGP.

Belongs to the RxLR effector family. As to quaternary structure, interacts with host ubiquitin E3 ligase NRL1.

The protein localises to the secreted. The protein resides in the host cytoplasm. It localises to the host nucleus. It is found in the host nucleoplasm. Effector that promotes P.infestans virulence and suppresses pattern-triggered immunity (PTI). Interacts with the host ubiquitin E3 ligase NRL1 and enhances the association between NRL1 and SWAP70 to promote proteasome-mediated degradation of SWAP70, which results in the suppression of immunity. This chain is RxLR effector protein PITG_02860, found in Phytophthora infestans (strain T30-4) (Potato late blight agent).